Consider the following 434-residue polypeptide: [Pyruvate dehydrogenase (acetyl-transferring)] kinase isozyme 1, mitochondrial (434 aa).

Residues 1-26 (MRLARLLRGGTSVRPLCAVPCASRSL) constitute a mitochondrion transit peptide. Tyrosine 136 carries the post-translational modification Phosphotyrosine; by FGFR1. A Histidine kinase domain is found at 161-391 (TEYKESFGVD…DAVIYIKALS (231 aa)). A Phosphotyrosine; by FGFR1, ABL1, FLT3 and JAK2 modification is found at tyrosine 241. Tyrosine 242 carries the phosphotyrosine; by FGFR1 modification. ATP is bound by residues 277–284 (ELFKNAMR), aspartate 316, 335–336 (ST), and 352–357 (GFGYGL). Threonine 336 bears the Phosphothreonine mark. An N6-succinyllysine modification is found at lysine 403.

Belongs to the PDK/BCKDK protein kinase family. In terms of assembly, homodimer, and heterodimer with PDK2. Interacts with the pyruvate dehydrogenase complex subunit DLAT, and is part of the multimeric pyruvate dehydrogenase complex that contains multiple copies of pyruvate dehydrogenase (E1), dihydrolipoamide acetyltransferase (DLAT, E2) and lipoamide dehydrogenase (DLD, E3). Interacts with phosphoglycerate kinase PGK1; the interaction is direct, occurs under hypoxic conditions and leads to PDK1-mediated inhibition of pyruvate dehydrogenase complex activity. Phosphorylated by constitutively activated ABL1, FGFR1, FLT3 and JAK2 (in vitro), and this may also occur in cancer cells that express constitutively activated ABL1, FGFR1, FLT3 and JAK2. Phosphorylation at Tyr-241 and Tyr-242 strongly increases kinase activity, while phosphorylation at Tyr-136 has a lesser effect. Phosphorylated under hypoxic conditions at Thr-336 by phosphoglycerate kinase PGK1 which has an activating effect.

The protein resides in the mitochondrion matrix. The enzyme catalyses L-seryl-[pyruvate dehydrogenase E1 alpha subunit] + ATP = O-phospho-L-seryl-[pyruvate dehydrogenase E1 alpha subunit] + ADP + H(+). Kinase that plays a key role in regulation of glucose and fatty acid metabolism and homeostasis via phosphorylation of the pyruvate dehydrogenase subunits PDHA1 and PDHA2. This inhibits pyruvate dehydrogenase activity, and thereby regulates metabolite flux through the tricarboxylic acid cycle, down-regulates aerobic respiration and inhibits the formation of acetyl-coenzyme A from pyruvate. Plays an important role in cellular responses to hypoxia and is important for cell proliferation under hypoxia. The sequence is that of [Pyruvate dehydrogenase (acetyl-transferring)] kinase isozyme 1, mitochondrial (Pdk1) from Mus musculus (Mouse).